The following is a 296-amino-acid chain: Maltose/maltodextrin transport system permease protein MalG (296 aa).

At 1–12 (MAMVQPKSQKAR) the chain is on the cytoplasmic side. The helical transmembrane segment at 13–35 (LFITHLLLLLFIAAIMFPLLMVV) threads the bilayer. The Periplasmic portion of the chain corresponds to 36 to 88 (AISLRQGNFATGSLIPEQISWDHWKLALGFSVEQADGRITPPPFPVLLWLWNS). An ABC transmembrane type-1 domain is found at 85 to 281 (LWNSVKVAGI…LPITIVFLLA (197 aa)). A helical transmembrane segment spans residues 89-111 (VKVAGISAIGIVALSTTCAYAFA). Over 112–123 (RMRFPGKATLLK) the chain is Cytoplasmic. Residues 124–143 (GMLIFQMFPAVLSLVALYAL) form a helical membrane-spanning segment. Residues 144 to 152 (FDRLGEYIP) are Periplasmic-facing. A helical transmembrane segment spans residues 153-175 (FIGLNTHGGVIFAYLGGIALHVW). Topologically, residues 176–204 (TIKGYFETIDSSLEEAAALDGATPWQAFR) are cytoplasmic. The helical transmembrane segment at 205–227 (LVLLPLSVPILAVVFILSFIAAI) threads the bilayer. The Periplasmic segment spans residues 228–257 (TEVPVASLLLRDVNSYTLAVGMQQYLNPQN). The chain crosses the membrane as a helical span at residues 258–280 (YLWGDFAAAAVMSALPITIVFLL). Topologically, residues 281 to 296 (AQRWLVNGLTAGGVKG) are cytoplasmic.

It belongs to the binding-protein-dependent transport system permease family. MalFG subfamily. The complex is composed of two ATP-binding proteins (MalK), two transmembrane proteins (MalG and MalF) and a solute-binding protein (MalE).

The protein localises to the cell inner membrane. Its function is as follows. Part of the ABC transporter complex MalEFGK involved in maltose/maltodextrin import. Probably responsible for the translocation of the substrate across the membrane. In Escherichia coli O157:H7, this protein is Maltose/maltodextrin transport system permease protein MalG (malG).